The chain runs to 424 residues: 3-phosphoshikimate 1-carboxyvinyltransferase (424 aa).

The 3-phosphoshikimate site is built by lysine 20, serine 21, and arginine 25. Lysine 20 is a binding site for phosphoenolpyruvate. Phosphoenolpyruvate-binding residues include glycine 92 and arginine 120. The 3-phosphoshikimate site is built by serine 165, glutamine 167, aspartate 313, and lysine 340. Residue glutamine 167 participates in phosphoenolpyruvate binding. Aspartate 313 (proton acceptor) is an active-site residue. Residues arginine 344 and arginine 386 each contribute to the phosphoenolpyruvate site.

The protein belongs to the EPSP synthase family. As to quaternary structure, monomer.

The protein resides in the cytoplasm. It carries out the reaction 3-phosphoshikimate + phosphoenolpyruvate = 5-O-(1-carboxyvinyl)-3-phosphoshikimate + phosphate. It participates in metabolic intermediate biosynthesis; chorismate biosynthesis; chorismate from D-erythrose 4-phosphate and phosphoenolpyruvate: step 6/7. In terms of biological role, catalyzes the transfer of the enolpyruvyl moiety of phosphoenolpyruvate (PEP) to the 5-hydroxyl of shikimate-3-phosphate (S3P) to produce enolpyruvyl shikimate-3-phosphate and inorganic phosphate. This Bacillus cytotoxicus (strain DSM 22905 / CIP 110041 / 391-98 / NVH 391-98) protein is 3-phosphoshikimate 1-carboxyvinyltransferase.